A 183-amino-acid polypeptide reads, in one-letter code: uncharacterized protein (183 aa).

To A.muscaria DOPA 4,5-dioxygenase.

This is an uncharacterized protein from Botryotinia fuckeliana (Noble rot fungus).